The primary structure comprises 154 residues: Catabolic 3-dehydroquinase (154 aa).

Y25 acts as the Proton acceptor in catalysis. Substrate contacts are provided by N79, H85, and D92. Catalysis depends on H105, which acts as the Proton donor. Residues I106–S107 and R116 each bind substrate.

Belongs to the type-II 3-dehydroquinase family. As to quaternary structure, homododecamer. Adopts a ring-like structure, composed of an arrangement of two hexameric rings stacked on top of one another.

It catalyses the reaction 3-dehydroquinate = 3-dehydroshikimate + H2O. It functions in the pathway aromatic compound metabolism; 3,4-dihydroxybenzoate biosynthesis; 3,4-dihydroxybenzoate from 3-dehydroquinate: step 1/2. Its function is as follows. Is involved in the catabolism of quinate. Allows the utilization of quinate as carbon source via the beta-ketoadipate pathway. In Botryotinia fuckeliana (strain B05.10) (Noble rot fungus), this protein is Catabolic 3-dehydroquinase.